Here is a 138-residue protein sequence, read N- to C-terminus: Phosphoribosyl-AMP cyclohydrolase (138 aa).

Asp92 provides a ligand contact to Mg(2+). Residue Cys93 coordinates Zn(2+). Mg(2+) is bound by residues Asp94 and Asp96. Residues Cys109 and Cys116 each contribute to the Zn(2+) site.

It belongs to the PRA-CH family. As to quaternary structure, homodimer. The cofactor is Mg(2+). It depends on Zn(2+) as a cofactor.

It localises to the cytoplasm. The enzyme catalyses 1-(5-phospho-beta-D-ribosyl)-5'-AMP + H2O = 1-(5-phospho-beta-D-ribosyl)-5-[(5-phospho-beta-D-ribosylamino)methylideneamino]imidazole-4-carboxamide. It functions in the pathway amino-acid biosynthesis; L-histidine biosynthesis; L-histidine from 5-phospho-alpha-D-ribose 1-diphosphate: step 3/9. Its function is as follows. Catalyzes the hydrolysis of the adenine ring of phosphoribosyl-AMP. The chain is Phosphoribosyl-AMP cyclohydrolase from Clavibacter sepedonicus (Clavibacter michiganensis subsp. sepedonicus).